The sequence spans 644 residues: uncharacterized protein (644 aa).

The segment at 65-117 (DSDVETTGGGGRGSTTSTEDRIDEHDDAIEDDGVSNEEDENQDAEQEQEVDLN) is disordered. A compositionally biased stretch (acidic residues) spans 89–114 (HDDAIEDDGVSNEEDENQDAEQEQEV).

This is an uncharacterized protein from Arabidopsis thaliana (Mouse-ear cress).